The primary structure comprises 153 residues: Large ribosomal subunit protein uL22 (153 aa).

This sequence belongs to the universal ribosomal protein uL22 family. As to quaternary structure, part of the 50S ribosomal subunit.

In terms of biological role, this protein binds specifically to 23S rRNA. It makes multiple contacts with different domains of the 23S rRNA in the assembled 50S subunit and ribosome. Its function is as follows. The globular domain of the protein is located near the polypeptide exit tunnel on the outside of the subunit, while an extended beta-hairpin is found that lines the wall of the exit tunnel in the center of the 70S ribosome. The sequence is that of Large ribosomal subunit protein uL22 from Methanococcus aeolicus (strain ATCC BAA-1280 / DSM 17508 / OCM 812 / Nankai-3).